An 805-amino-acid polypeptide reads, in one-letter code: Phenylalanine--tRNA ligase beta subunit (805 aa).

Positions Val39 to Ile155 constitute a tRNA-binding domain. One can recognise a B5 domain in the interval Asp408–Gly479. The Mg(2+) site is built by Asp457, Asp463, Glu466, and Glu467. The FDX-ACB domain occupies Ser707–Arg804.

The protein belongs to the phenylalanyl-tRNA synthetase beta subunit family. Type 1 subfamily. Tetramer of two alpha and two beta subunits. Requires Mg(2+) as cofactor.

It is found in the cytoplasm. The catalysed reaction is tRNA(Phe) + L-phenylalanine + ATP = L-phenylalanyl-tRNA(Phe) + AMP + diphosphate + H(+). The chain is Phenylalanine--tRNA ligase beta subunit from Cereibacter sphaeroides (strain ATCC 17023 / DSM 158 / JCM 6121 / CCUG 31486 / LMG 2827 / NBRC 12203 / NCIMB 8253 / ATH 2.4.1.) (Rhodobacter sphaeroides).